The chain runs to 655 residues: p-hydroxybenzoic acid efflux pump subunit AaeB (655 aa).

Helical transmembrane passes span 13–33 (FAVKLATAIVLALFVGFHFQL), 38–58 (WAVLTAAIVAAGPAFAAGGEP), 69–89 (LRIIGTFIGCIAGLVIIIAMI), 93–113 (LLMILVCCIWAGFCTWISSLV), 121–141 (WGLAGYTALIIVITIQPEPLL), 152–172 (EIVIGIVCAIMADLLFSPRSI), 370–390 (LFWLWTGWTSGSGVMVMIAVV), 407–427 (FIYGTLAALPLGLLYFLVIIP), 431–451 (QSMLLLCISLAVLGFFLGIEV), and 482–502 (FLDSALGQIVGCVLAFTVILL).

This sequence belongs to the aromatic acid exporter ArAE (TC 2.A.85) family.

It localises to the cell inner membrane. In terms of biological role, forms an efflux pump with AaeA. Could function as a metabolic relief valve, allowing to eliminate certain compounds when they accumulate to high levels in the cell. This chain is p-hydroxybenzoic acid efflux pump subunit AaeB, found in Shigella dysenteriae serotype 1 (strain Sd197).